The chain runs to 288 residues: Pantothenate synthetase (288 aa).

30–37 (MGALHEGH) is a binding site for ATP. Histidine 37 serves as the catalytic Proton donor. Glutamine 61 is a (R)-pantoate binding site. Glutamine 61 is a beta-alanine binding site. An ATP-binding site is contributed by 147–150 (GEKD). A (R)-pantoate-binding site is contributed by glutamine 153. Residues valine 176 and 184–187 (ISSR) contribute to the ATP site.

Belongs to the pantothenate synthetase family. Homodimer.

It is found in the cytoplasm. It carries out the reaction (R)-pantoate + beta-alanine + ATP = (R)-pantothenate + AMP + diphosphate + H(+). Its pathway is cofactor biosynthesis; (R)-pantothenate biosynthesis; (R)-pantothenate from (R)-pantoate and beta-alanine: step 1/1. Catalyzes the condensation of pantoate with beta-alanine in an ATP-dependent reaction via a pantoyl-adenylate intermediate. In Chlorobium phaeobacteroides (strain BS1), this protein is Pantothenate synthetase.